Consider the following 626-residue polypeptide: Serine/threonine-protein kinase PknH (626 aa).

The Cytoplasmic portion of the chain corresponds to methionine 1 to proline 403. Residues tyrosine 16–leucine 276 form the Protein kinase domain. Residues leucine 22–valine 30 and lysine 45 each bind ATP. The active-site Proton acceptor is the aspartate 139. Threonine 170 bears the Phosphothreonine mark. The segment at glutamine 292–proline 396 is disordered. 2 stretches are compositionally biased toward pro residues: residues proline 297–methionine 308 and arginine 316–proline 342. Residues glycine 343–proline 355 show a composition bias toward low complexity. Residues leucine 404 to isoleucine 424 form a helical membrane-spanning segment. The Extracellular segment spans residues alanine 425 to glutamate 626. Cystine bridges form between cysteine 482–cysteine 545 and cysteine 587–cysteine 604.

The protein belongs to the protein kinase superfamily. Ser/Thr protein kinase family. It depends on a divalent metal cation as a cofactor. Autophosphorylated on threonine and serine residues. Dephosphorylated by PstP.

Its subcellular location is the cell membrane. The enzyme catalyses L-seryl-[protein] + ATP = O-phospho-L-seryl-[protein] + ADP + H(+). The catalysed reaction is L-threonyl-[protein] + ATP = O-phospho-L-threonyl-[protein] + ADP + H(+). May regulate bacterial growth in response to external signals to facilitate adaptation to the host environment. This is Serine/threonine-protein kinase PknH (pknH) from Mycobacterium tuberculosis (strain CDC 1551 / Oshkosh).